The following is a 221-amino-acid chain: Prolactin-3B1 (221 aa).

Residues 1-30 form the signal peptide; sequence MQLPLTPLSFSGTLLLMAMSNFLLWEHVTS. Disulfide bonds link C81/C196 and C213/C221.

This sequence belongs to the somatotropin/prolactin family.

The protein localises to the secreted. The protein is Prolactin-3B1 (PRL3B1) of Mesocricetus auratus (Golden hamster).